The chain runs to 318 residues: DNA-directed RNA polymerase subunit alpha 2 (318 aa).

Residues 1–227 are alpha N-terminal domain (alpha-NTD); it reads MALENLLHPT…NQLRNILDIE (227 aa). The alpha C-terminal domain (alpha-CTD) stretch occupies residues 242 to 318; it reads INPILLKHVE…TLIENWPQDL (77 aa).

The protein belongs to the RNA polymerase alpha chain family. As to quaternary structure, homodimer. The RNAP catalytic core consists of 2 alpha, 1 beta, 1 beta' and 1 omega subunit. When a sigma factor is associated with the core the holoenzyme is formed, which can initiate transcription.

It catalyses the reaction RNA(n) + a ribonucleoside 5'-triphosphate = RNA(n+1) + diphosphate. In terms of biological role, DNA-dependent RNA polymerase catalyzes the transcription of DNA into RNA using the four ribonucleoside triphosphates as substrates. This Francisella tularensis subsp. tularensis (strain FSC 198) protein is DNA-directed RNA polymerase subunit alpha 2.